Reading from the N-terminus, the 319-residue chain is 33 kDa chaperonin (319 aa).

Disulfide bonds link Cys239–Cys241 and Cys272–Cys275. The disordered stretch occupies residues 300-319 (EVSEEMKKAEEKEKEEKNKK).

It belongs to the HSP33 family. In terms of processing, under oxidizing conditions two disulfide bonds are formed involving the reactive cysteines. Under reducing conditions zinc is bound to the reactive cysteines and the protein is inactive.

It is found in the cytoplasm. Functionally, redox regulated molecular chaperone. Protects both thermally unfolding and oxidatively damaged proteins from irreversible aggregation. Plays an important role in the bacterial defense system toward oxidative stress. This is 33 kDa chaperonin from Clostridium perfringens (strain ATCC 13124 / DSM 756 / JCM 1290 / NCIMB 6125 / NCTC 8237 / Type A).